We begin with the raw amino-acid sequence, 298 residues long: MNALTLPDIAAQASRQALPLDWVGMCGIALPILIDGQRLTATADAGVSLDDGAARGIHMSRLYLALEMLDQQPLTPALLRNVLQRFLDSHEGLSNNAYLRIHTDLLLKRPALVSPLAGWKRYPVSIEARLENQMFHVELKIDVTYSSTCPCSAALARQLIQQQFLDDFGDTSLRHEDVLTWLGSANGIVATPHSQRSSAQLLITLDGDQAGLPINDLIDNVEAALGTAVQTAVKRADEQAFALANGQNLMFCEDAARRLNLALKRSDAVKAFHLKVIHAESLHAHDAVAESRWTRNPA.

Belongs to the GTP cyclohydrolase IV family.

The catalysed reaction is GTP + H2O = 7,8-dihydroneopterin 3'-triphosphate + formate + H(+). It functions in the pathway cofactor biosynthesis; 7,8-dihydroneopterin triphosphate biosynthesis; 7,8-dihydroneopterin triphosphate from GTP: step 1/1. Functionally, converts GTP to 7,8-dihydroneopterin triphosphate. This is GTP cyclohydrolase FolE2 from Pseudomonas fluorescens (strain SBW25).